The following is a 142-amino-acid chain: Large ribosomal subunit protein uL13 (142 aa).

Belongs to the universal ribosomal protein uL13 family. Part of the 50S ribosomal subunit.

Its function is as follows. This protein is one of the early assembly proteins of the 50S ribosomal subunit, although it is not seen to bind rRNA by itself. It is important during the early stages of 50S assembly. This Aliivibrio salmonicida (strain LFI1238) (Vibrio salmonicida (strain LFI1238)) protein is Large ribosomal subunit protein uL13.